Reading from the N-terminus, the 298-residue chain is Inosose dehydratase (298 aa).

The protein belongs to the IolE/MocC family. Requires glutathione as cofactor. Co(2+) is required as a cofactor. It depends on Mn(2+) as a cofactor.

It catalyses the reaction scyllo-inosose = 3D-3,5/4-trihydroxycyclohexane-1,2-dione + H2O. Its function is as follows. Catalyzes the dehydration of inosose (2-keto-myo-inositol, 2KMI or 2,4,6/3,5-pentahydroxycyclohexanone) to 3D-(3,5/4)-trihydroxycyclohexane-1,2-dione (D-2,3-diketo-4-deoxy-epi-inositol). This is Inosose dehydratase from Histophilus somni (strain 129Pt) (Haemophilus somnus).